The chain runs to 715 residues: Palmitoyltransferase ZDHHC5 (715 aa).

Residues 1–13 are Cytoplasmic-facing; it reads MPAESGKRFKPSK. Residues 14–34 form a helical membrane-spanning segment; that stretch reads YVPVSAAAIFLVGATTLFFAF. Topologically, residues 35-38 are extracellular; that stretch reads TCPG. The chain crosses the membrane as a helical span at residues 39–59; the sequence is LSLYVSPAVPIYNAIMFLFVL. The Cytoplasmic portion of the chain corresponds to 60-148; that stretch reads ANFSMATFMD…NCIGRRNYRY (89 aa). A Phosphotyrosine modification is found at tyrosine 91. The region spanning 104–154 is the DHHC domain; sequence KWCATCRFYRPPRCSHCSVCDNCVEEFDHHCPWVNNCIGRRNYRYFFLFLL. Cysteine 134 acts as the S-palmitoyl cysteine intermediate in catalysis. Residues 149-169 form a helical membrane-spanning segment; sequence FFLFLLSLTAHIMGVFGFGLL. The Extracellular portion of the chain corresponds to 170 to 191; it reads YVLYHIEELSGVRTAVTMAVMC. A helical transmembrane segment spans residues 192–212; that stretch reads VAGLFFIPVAGLTGFHVVLVA. The Cytoplasmic segment spans residues 213 to 715; it reads RGRTTNEQVT…VGGTTYEISV (503 aa). Serine 247 carries the phosphoserine modification. Residues 289-715 are disordered; that stretch reads GELRRTKSKG…VGGTTYEISV (427 aa). Phosphothreonine is present on threonine 294. Phosphoserine occurs at positions 296 and 299. Threonine 303 carries the post-translational modification Phosphothreonine. Serine 345 carries the post-translational modification Phosphoserine. Phosphothreonine is present on residues threonine 348 and threonine 350. A compositionally biased stretch (low complexity) spans 359-373; that stretch reads SSSSTSAAMPHSSSA. A phosphoserine mark is found at serine 380, serine 398, serine 406, and serine 409. Threonine 411 carries the post-translational modification Phosphothreonine. Phosphoserine is present on residues serine 415, serine 425, serine 429, and serine 432. Positions 422-432 are enriched in low complexity; it reads SSGSRSSSLKS. Threonine 436 is modified (phosphothreonine). Over residues 442-478 the composition is skewed to polar residues; that stretch reads QLQSIRSEGTTSTSYKSLANQTRNGSLSYDSLLTPSD. 2 positions are modified to phosphoserine: serine 529 and serine 554. Arginine 617 carries the omega-N-methylarginine modification. Serine 621 carries the phosphoserine modification. Threonine 659 carries the post-translational modification Phosphothreonine. The span at 666 to 677 shows a compositional bias: polar residues; sequence LKTTYSKSNGQP. Residues serine 684 and serine 694 each carry the phosphoserine modification. Arginine 697 carries the omega-N-methylarginine modification.

This sequence belongs to the DHHC palmitoyltransferase family. ERF2/ZDHHC9 subfamily.

It localises to the cell membrane. It catalyses the reaction L-cysteinyl-[protein] + hexadecanoyl-CoA = S-hexadecanoyl-L-cysteinyl-[protein] + CoA. Functionally, palmitoyltransferase that catalyzes the addition of palmitate onto various protein substrates such as CTNND2, CD36, GSDMD, NLRP3, NOD1, NOD2, STAT3 and S1PR1 thus plays a role in various biological processes including cell adhesion, inflammation, fatty acid uptake, bacterial sensing or cardiac functions. Plays an important role in the regulation of synapse efficacy by mediating palmitoylation of delta-catenin/CTNND2, thereby increasing synaptic delivery and surface stabilization of alpha-amino-3-hydroxy-5-methyl-4-isoxazole propionic acid receptors (AMPARs). Under basal conditions, remains at the synaptic membrane through FYN-mediated phosphorylation that prevents association with endocytic proteins. Neuronal activity enhances the internalization and trafficking of DHHC5 from spines to dendritic shafts where it palmitoylates delta-catenin/CTNND2. Regulates cell adhesion at the plasma membrane by palmitoylating GOLGA7B and DSG2. Plays a role in innate immune response by mediating the palmitoylation of NOD1 and NOD2 and their proper recruitment to the bacterial entry site and phagosomes. Also participates in fatty acid uptake by palmitoylating CD36 and thereby targeting it to the plasma membrane. Upon binding of fatty acids to CD36, gets phosphorylated by LYN leading to inactivation and subsequent CD36 caveolar endocytosis. Controls oligodendrocyte development by catalyzing STAT3 palmitoylation. Acts as a regulator of inflammatory response by mediating palmitoylation of NLRP3 and GSDMD. Palmitoylates NLRP3 to promote inflammasome assembly and activation. Activates pyroptosis by catalyzing palmitoylation of gasdermin-D (GSDMD), thereby promoting membrane translocation and pore formation of GSDMD. The sequence is that of Palmitoyltransferase ZDHHC5 (ZDHHC5) from Pan troglodytes (Chimpanzee).